A 475-amino-acid chain; its full sequence is tRNA-dihydrouridine(16/17) synthase [NAD(P)(+)]-like (475 aa).

FMN is bound by residues 23–25 and glutamine 79; that span reads PMV. The active-site Proton donor is cysteine 108. Residues lysine 147, histidine 175, 208-210, and 232-233 each bind FMN; these read NGN and AE. The disordered stretch occupies residues 343–388; it reads GPREGSKENSGGRSKRALEEEEGSMEGLSKNKLKKQLRNPHKTFDP. The segment covering 373–383 has biased composition (basic residues); sequence NKLKKQLRNPH.

The protein belongs to the Dus family. Dus1 subfamily. FMN is required as a cofactor.

The protein resides in the cytoplasm. It localises to the nucleus. It catalyses the reaction 5,6-dihydrouridine(16) in tRNA + NADP(+) = uridine(16) in tRNA + NADPH + H(+). It carries out the reaction 5,6-dihydrouridine(16) in tRNA + NAD(+) = uridine(16) in tRNA + NADH + H(+). The enzyme catalyses 5,6-dihydrouridine(17) in tRNA + NAD(+) = uridine(17) in tRNA + NADH + H(+). The catalysed reaction is 5,6-dihydrouridine(17) in tRNA + NADP(+) = uridine(17) in tRNA + NADPH + H(+). Catalyzes the synthesis of dihydrouridine, a modified base found in the D-loop of most tRNAs. Specifically modifies U16 and U17 in cytoplasmic tRNAs. Affects the level of some mature tRNA and thereby the total cellular translation. The polypeptide is tRNA-dihydrouridine(16/17) synthase [NAD(P)(+)]-like (Dus1l) (Mus musculus (Mouse)).